The following is a 428-amino-acid chain: Adenylosuccinate synthetase (428 aa).

GTP is bound by residues 12–18 (GDEGKGK) and 40–42 (GHT). Catalysis depends on aspartate 13, which acts as the Proton acceptor. Mg(2+)-binding residues include aspartate 13 and glycine 40. Residues 13–16 (DEGK), 38–41 (NAGH), threonine 129, arginine 143, glutamine 224, threonine 239, and arginine 303 contribute to the IMP site. The Proton donor role is filled by histidine 41. 299–305 (VTTGRIR) contributes to the substrate binding site. GTP is bound by residues arginine 305, 331 to 333 (KVD), and 410 to 412 (AYG).

It belongs to the adenylosuccinate synthetase family. In terms of assembly, homodimer. The cofactor is Mg(2+).

The protein localises to the cytoplasm. The enzyme catalyses IMP + L-aspartate + GTP = N(6)-(1,2-dicarboxyethyl)-AMP + GDP + phosphate + 2 H(+). It functions in the pathway purine metabolism; AMP biosynthesis via de novo pathway; AMP from IMP: step 1/2. Its function is as follows. Plays an important role in the de novo pathway of purine nucleotide biosynthesis. Catalyzes the first committed step in the biosynthesis of AMP from IMP. The protein is Adenylosuccinate synthetase of Francisella tularensis subsp. mediasiatica (strain FSC147).